Reading from the N-terminus, the 363-residue chain is MFCLEDQVVLIAGGSQGLGKQFGQKYWDESRHSKIILVSRSDVKLRNAITDITGGRQEPVELVMPEVAASEPSASGSSAINLSKSSNHAGFESELRSNSNRSSSSLKESTNVVTHLTTNAADSRIVYIACDLSDPDAVERMFVTLQHNNLLPTQVLACAGGSIPKLFTDLTAKELEMGVKMNYMTTLFVIHKAAQMVPQAHLILFSSSTAFFPFIGYSQYAPAKVSLKALTSILRHELPNTRISCVYPGNFYSEGYVLEEMSKPDITKSIEGSSYPISCEECCDKIVWWLNRGYDDVTTDSIGWFLMSLDMGLNKHNNNSAYWFVQWLIGVIANLLVVPFYMVLCSYQINKWHKQNKNKNTLL.

L10 serves as a coordination point for NADP(+). 3 residues coordinate NADPH: G13, S15, and G17. Positions 13-17 match the GXSXG motif; it reads GGSQG. Position 18 (L18) interacts with NADP(+). Residues R40, K44, D131, and L132 each contribute to the NADPH site. An NADP(+)-binding site is contributed by D131. S206 acts as the Proton donor in catalysis. Y220, K224, and S253 together coordinate NADP(+). Catalysis depends on Y220, which acts as the Proton acceptor. The Lowers pKa of active site Tyr role is filled by K224. A helical membrane pass occupies residues 324–344; sequence FVQWLIGVIANLLVVPFYMVL.

It belongs to the short-chain dehydrogenases/reductases (SDR) family.

It localises to the endoplasmic reticulum membrane. It carries out the reaction sphinganine + NADP(+) = 3-oxosphinganine + NADPH + H(+). The protein operates within lipid metabolism; sphingolipid metabolism. In terms of biological role, catalyzes the reduction of 3'-oxosphinganine (3-ketodihydrosphingosine/KDS) to sphinganine (dihydrosphingosine/DHS), the second step of de novo sphingolipid biosynthesis. The sequence is that of 3-ketodihydrosphingosine reductase TSC10 (TSC10) from Candida glabrata (strain ATCC 2001 / BCRC 20586 / JCM 3761 / NBRC 0622 / NRRL Y-65 / CBS 138) (Yeast).